Consider the following 190-residue polypeptide: Potassium-transporting ATPase KdpC subunit (190 aa).

A helical membrane pass occupies residues 10–30 (TFLFLLLITGGVYPLLTTALG).

This sequence belongs to the KdpC family. As to quaternary structure, the system is composed of three essential subunits: KdpA, KdpB and KdpC.

It is found in the cell inner membrane. Its function is as follows. Part of the high-affinity ATP-driven potassium transport (or Kdp) system, which catalyzes the hydrolysis of ATP coupled with the electrogenic transport of potassium into the cytoplasm. This subunit acts as a catalytic chaperone that increases the ATP-binding affinity of the ATP-hydrolyzing subunit KdpB by the formation of a transient KdpB/KdpC/ATP ternary complex. The polypeptide is Potassium-transporting ATPase KdpC subunit (Escherichia coli O6:H1 (strain CFT073 / ATCC 700928 / UPEC)).